Reading from the N-terminus, the 638-residue chain is Threonine--tRNA ligase (638 aa).

In terms of domain architecture, TGS spans Met1–Thr61. Residues Asp242–Pro533 are catalytic. The Zn(2+) site is built by Cys333, His384, and His510.

It belongs to the class-II aminoacyl-tRNA synthetase family. In terms of assembly, homodimer. The cofactor is Zn(2+).

It is found in the cytoplasm. The enzyme catalyses tRNA(Thr) + L-threonine + ATP = L-threonyl-tRNA(Thr) + AMP + diphosphate + H(+). Its function is as follows. Catalyzes the attachment of threonine to tRNA(Thr) in a two-step reaction: L-threonine is first activated by ATP to form Thr-AMP and then transferred to the acceptor end of tRNA(Thr). Also edits incorrectly charged L-seryl-tRNA(Thr). The sequence is that of Threonine--tRNA ligase from Azoarcus sp. (strain BH72).